A 656-amino-acid chain; its full sequence is Protein terminal ear1 (656 aa).

In terms of domain architecture, RRM spans 211-283 (SLVVLSPLPG…RRLVVEFTRP (73 aa)). 2 disordered regions span residues 280-408 (FTRP…WKGR) and 576-656 (LTDP…GYDD). Residues 288-299 (PRRRGYAPHQHR) are compositionally biased toward basic residues. Over residues 314-331 (PSQPTSSQPPASSSSSGS) the composition is skewed to low complexity. The span at 346 to 358 (CKSSAGSDQSSKG) shows a compositional bias: polar residues. Composition is skewed to low complexity over residues 377–397 (AAAA…QKGV), 585–601 (RSPA…SRAA), and 612–630 (PAPS…STHA). The segment covering 642–656 (DIRLAGELRRLGYDD) has biased composition (basic and acidic residues).

In terms of tissue distribution, expressed below the shoot tip down the flanks of shoot apex in an alternating pattern. Not expressed in root tips, leaves or immature ears (female inflorescences).

Probable RNA-binding protein. Involved in the regulation of leaf initiation rate and shoot development. Seems to act more predominantly in the early stages of the leaf development, rather than in the later phase. The chain is Protein terminal ear1 (TE1) from Zea mays (Maize).